Here is a 593-residue protein sequence, read N- to C-terminus: Copine-5 (593 aa).

The 133-residue stretch at 2 to 134 (EQPEDMASLS…SSGSRLEKPL (133 aa)) folds into the C2 1 domain. At Ser19 the chain carries Phosphoserine. Residues Asp38, Asp44, Asp98, Asp100, Ser103, Lys108, and Asp110 each contribute to the Ca(2+) site. Ser103 carries the post-translational modification Phosphoserine. Ser140 carries the post-translational modification Phosphoserine. The C2 2 domain maps to 161–284 (KCGTIILSAE…ARGQSQFNIY (124 aa)). 5 residues coordinate Ca(2+): Asp192, Asp198, Asp254, Asp256, and Asp262. The region spanning 328-554 (NFTVAIDFTA…DVLAEIPDQL (227 aa)) is the VWFA domain. Positions 562–593 (GIRPRPPPAAPAQSPPQSPAHSPPGSPVHTHI) are disordered. The span at 565-587 (PRPPPAAPAQSPPQSPAHSPPGS) shows a compositional bias: pro residues.

This sequence belongs to the copine family. Requires Ca(2+) as cofactor. As to expression, expressed in the cerebra and cerebellum of newborn brain. Expressed in the eye, lung and muscles but weakly expressed in the adult brain (at protein level).

It localises to the perikaryon. The protein resides in the cell projection. Probable calcium-dependent phospholipid-binding protein that may play a role in calcium-mediated intracellular processes. Plays a role in dendrite formation by melanocytes. The protein is Copine-5 of Mus musculus (Mouse).